A 556-amino-acid polypeptide reads, in one-letter code: Amidophosphoribosyltransferase (556 aa).

Residues 1 to 57 (MCLAVGVGVRAPKHVPQIRRLGRAGRRLRCVTNCALGSCPIVTVQQPGRDFSSPREE) constitute a propeptide that is removed on maturation. Catalysis depends on Cys58, which acts as the Nucleophile. In terms of domain architecture, Glutamine amidotransferase type-2 spans 58–284 (CGVFGVWAPG…PGELLAIDAD (227 aa)). Cys299 lines the [4Fe-4S] cluster pocket. Mg(2+) contacts are provided by Ser346, Asp408, and Asp409. Residues Cys445, Cys501, and Cys504 each coordinate [4Fe-4S] cluster.

This sequence in the C-terminal section; belongs to the purine/pyrimidine phosphoribosyltransferase family. It depends on Mg(2+) as a cofactor. Requires [4Fe-4S] cluster as cofactor.

It carries out the reaction 5-phospho-beta-D-ribosylamine + L-glutamate + diphosphate = 5-phospho-alpha-D-ribose 1-diphosphate + L-glutamine + H2O. The protein operates within purine metabolism; IMP biosynthesis via de novo pathway; N(1)-(5-phospho-D-ribosyl)glycinamide from 5-phospho-alpha-D-ribose 1-diphosphate: step 1/2. Its function is as follows. Catalyzes the formation of phosphoribosylamine from phosphoribosylpyrophosphate (PRPP) and glutamine. This chain is Amidophosphoribosyltransferase, found in Mycobacterium leprae (strain TN).